Consider the following 328-residue polypeptide: Naphthalene 1,2-dioxygenase system ferredoxin--NAD(P)(+), reductase component (328 aa).

Residues 1–89 enclose the 2Fe-2S ferredoxin-type domain; sequence MELLIQPNNR…NCAIEVPEAD (89 aa). Positions 35, 40, 43, and 73 each coordinate [2Fe-2S] cluster. Residues 96 to 193 form the FAD-binding FR-type domain; sequence ARIIKGTVVA…SGPLGTAYLR (98 aa).

Belongs to the bacterial ring-hydroxylating dioxygenase ferredoxin reductase component family. As to quaternary structure, the naphthalene dioxygenase (NDO) multicomponent enzyme system is composed of an electron transfer component and a dioxygenase component (iron sulfur protein (ISP)). The electron transfer component is composed of a ferredoxin reductase (NdoR) and a ferredoxin (NdoA), and the dioxygenase component is formed of a heterohexamer (trimer of heterodimers) of three large alpha subunits (NdoB) and three small beta subunits (NdoC). [2Fe-2S] cluster serves as cofactor. It depends on FAD as a cofactor.

The catalysed reaction is 2 reduced [2Fe-2S]-[ferredoxin] + NAD(+) + H(+) = 2 oxidized [2Fe-2S]-[ferredoxin] + NADH. It carries out the reaction 2 reduced [2Fe-2S]-[ferredoxin] + NADP(+) + H(+) = 2 oxidized [2Fe-2S]-[ferredoxin] + NADPH. It participates in aromatic compound metabolism; naphthalene degradation. With respect to regulation, strongly inhibited by p-chloromercuribenzoate. Also inhibited by N-ethylmaleimide and o-phenanthroline. Its function is as follows. Component of the naphthalene dioxygenase (NDO) multicomponent enzyme system which catalyzes the incorporation of both atoms of molecular oxygen into naphthalene to form cis-(1R,2S)-dihydroxy-1,2-dihydronaphthalene. Ferredoxin reductase catalyzes the transfer of electrons from NADH to ferredoxin (NdoA). NADPH is also effective but yields only 39% of the activity obtained with NADH. Also able to catalyze the cis-dihydroxylation of biphenyl and phenanthrene. In Pseudomonas putida (Arthrobacter siderocapsulatus), this protein is Naphthalene 1,2-dioxygenase system ferredoxin--NAD(P)(+), reductase component (ndoR).